Consider the following 290-residue polypeptide: Inositol-1-monophosphatase (290 aa).

The Mg(2+) site is built by Glu83, Asp104, Ile106, and Asp107. Glu83 contributes to the substrate binding site. Substrate contacts are provided by residues 106–109 (IDGT), Arg206, and Asp235. Position 235 (Asp235) interacts with Mg(2+).

It belongs to the inositol monophosphatase superfamily. Requires Mg(2+) as cofactor.

It catalyses the reaction a myo-inositol phosphate + H2O = myo-inositol + phosphate. This chain is Inositol-1-monophosphatase (suhB), found in Mycobacterium bovis (strain ATCC BAA-935 / AF2122/97).